The primary structure comprises 601 residues: Aspartate--tRNA ligase (601 aa).

Glutamate 183 provides a ligand contact to L-aspartate. An aspartate region spans residues 207-210 (QIFK). Arginine 229 is a binding site for L-aspartate. ATP-binding positions include 229-231 (RDE) and glutamine 238. Histidine 457 serves as a coordination point for L-aspartate. Glutamate 497 is an ATP binding site. Arginine 504 contributes to the L-aspartate binding site. 549–552 (GIDR) serves as a coordination point for ATP.

It belongs to the class-II aminoacyl-tRNA synthetase family. Type 1 subfamily. As to quaternary structure, homodimer.

Its subcellular location is the cytoplasm. It catalyses the reaction tRNA(Asp) + L-aspartate + ATP = L-aspartyl-tRNA(Asp) + AMP + diphosphate. Its function is as follows. Catalyzes the attachment of L-aspartate to tRNA(Asp) in a two-step reaction: L-aspartate is first activated by ATP to form Asp-AMP and then transferred to the acceptor end of tRNA(Asp). This Leptospira interrogans serogroup Icterohaemorrhagiae serovar copenhageni (strain Fiocruz L1-130) protein is Aspartate--tRNA ligase.